Reading from the N-terminus, the 102-residue chain is MSSPPEGKLETKAGHPPAVKAGGMRIVQKHPHTGDGKEERDKDDQEWESTSPPKPTVFISGVIARGDKDFPPAAAQVAHQKPHASMDKHVSPRTQHIQQPRK.

Positions 1 to 102 are disordered; that stretch reads MSSPPEGKLE…RTQHIQQPRK (102 aa). An N-acetylserine modification is found at Ser-2. Residue Ser-3 is modified to Phosphoserine; by MTOR. The residue at position 29 (Lys-29) is an N6-acetyllysine. Positions 32-43 are enriched in basic and acidic residues; that stretch reads HTGDGKEERDKD. 3 positions are modified to phosphoserine: Ser-49, Ser-51, and Ser-91. Positions 92-102 are enriched in polar residues; that stretch reads PRTQHIQQPRK.

This sequence belongs to the DAP-DAPL1 family. As to quaternary structure, associates with ribosomes; inhibiting translation. Interacts with eiF5a (EIF5A and EIF5A2); inhibiting translation. Phosphorylated. Phosphorylation by MTOR inhibits the suppressive activity of DAP toward autophagy.

In terms of biological role, ribosome-binding protein involved in ribosome hibernation, a process during which ribosomes are stabilized in an inactive state and preserved from proteasomal degradation. Acts via its association with eiF5a (EIF5A and EIF5A2) at the polypeptide exit tunnel of the ribosome, preventing mRNA translation. Involved in ribosome hibernation in the mature oocyte by preventing mRNA translation, leading to ribosome inactivation. Ribosomes, which are produced in large quantities during oogenesis, are stored and translationally repressed in the oocyte and early embryo. Also acts as a negative regulator of autophagy. Involved in mediating interferon-gamma-induced cell death. This Mus musculus (Mouse) protein is Death-associated protein 1 (Dap).